The primary structure comprises 291 residues: Cell division protein FtsX (291 aa).

Over 1–18 the chain is Cytoplasmic; that stretch reads MSSNFDKFQKRRLISSYF. The helical transmembrane segment at 19–39 threads the bilayer; sequence SVVLSVFLVLFLLGVLGLFII. Over 40-162 the chain is Periplasmic; that stretch reads NSKKLADDFK…VNLVNDNIKK (123 aa). A helical membrane pass occupies residues 163-183; sequence VSMWILIISGFLTVIAVLLIN. The Cytoplasmic segment spans residues 184 to 220; that stretch reads SSLRLSIHSNRFIIKTMQMVGATKSFIRKPFVMRSVK. The chain crosses the membrane as a helical span at residues 221–241; that stretch reads LGMLGALLAIIALIGLLFYVE. The Periplasmic segment spans residues 242–253; it reads TNFPGLGILEDK. The chain crosses the membrane as a helical span at residues 254–274; the sequence is ALIGLVLLAVFGLGVLITWVS. Over 275-291 the chain is Cytoplasmic; that stretch reads THFATQRFLNLRTDDLY.

It belongs to the ABC-4 integral membrane protein family. FtsX subfamily.

The protein localises to the cell inner membrane. Required for cell division and gliding motility. The sequence is that of Cell division protein FtsX from Flavobacterium johnsoniae (strain ATCC 17061 / DSM 2064 / JCM 8514 / BCRC 14874 / CCUG 350202 / NBRC 14942 / NCIMB 11054 / UW101) (Cytophaga johnsonae).